The sequence spans 904 residues: E3 ubiquitin-protein ligase ZNF598 (904 aa).

The segment at 29–69 (CVLCCGDLEATALGRCDHPVCYRCSTKMRVLCEQRYCAVCR) adopts an RING-type zinc-finger fold. Residues 187-210 (PLCKFCDERYLDNDELLKHLRRDH) form a C2H2-type zinc finger. Tyr-306 is subject to Phosphotyrosine. Disordered stretches follow at residues 312–469 (YSRQ…GLAL) and 490–656 (VSSV…LPRP). The segment covering 346–358 (AAAVRASVAAQQQ) has biased composition (low complexity). The span at 359–388 (EEARRSEDQEEGGRPKKEEAAARGPEDPRG) shows a compositional bias: basic and acidic residues. Residues 404-416 (ETSTNGPVSQEAF) show a composition bias toward polar residues. The segment covering 418 to 431 (VTGPAAPGCVGVPG) has biased composition (low complexity). Phosphoserine is present on residues Gly-428, Gly-431, and Ser-437. Low complexity-rich tracts occupy residues 447–461 (SLSA…TAAT) and 502–513 (SLVSAWNSSSSS). The segment covering 521–531 (LSAQATGSGQP) has biased composition (polar residues). The segment covering 534 to 543 (KAGKGSRGGR) has biased composition (basic residues). A compositionally biased stretch (polar residues) spans 564–584 (LLSTRPTGSVSSTLGLASIQP).

This sequence belongs to the ZNF598/HEL2 family. In terms of assembly, interacts with the E2 ubiquitin-conjugating enzyme UBE2D3. Component of the 4EHP-GYF2 complex, at least composed of EIF4E2, GIGYF2 and ZNF598.

The protein localises to the cytoplasm. The protein resides in the cytosol. The enzyme catalyses S-ubiquitinyl-[E2 ubiquitin-conjugating enzyme]-L-cysteine + [acceptor protein]-L-lysine = [E2 ubiquitin-conjugating enzyme]-L-cysteine + N(6)-ubiquitinyl-[acceptor protein]-L-lysine.. It functions in the pathway protein modification; protein ubiquitination. Functionally, E3 ubiquitin-protein ligase that plays a key role in the ribosome quality control (RQC), a pathway that takes place when a ribosome has stalled during translation, leading to degradation of nascent peptide chains. ZNF598 is activated when ribosomes are stalled within an mRNA following translation of prematurely polyadenylated mRNAs. Acts as a ribosome collision sensor: specifically recognizes and binds collided di-ribosome, which arises when a trailing ribosome encounters a slower leading ribosome, leading to terminally arrest translation. Following binding to colliding ribosomes, mediates monoubiquitination of 40S ribosomal proteins RPS10/eS10 and RPS3/uS3, and 'Lys-63'-linked polyubiquitination of RPS20/uS10. Polyubiquitination of RPS20/uS10 promotes recruitment of the RQT (ribosome quality control trigger) complex, which drives the disassembly of stalled ribosomes, followed by degradation of nascent peptides. E3 ubiquitin-protein ligase activity is dependent on the E2 ubiquitin-conjugating enzyme UBE2D3. Also acts as an adapter that recruits the 4EHP-GYF2 complex to mRNAs. Independently of its role in RQC, may also act as a negative regulator of interferon-stimulated gene (ISG) expression. In terms of biological role, (Microbial infection) Required for poxvirus protein synthesis by mediating ubiquitination of RPS10/eS10 and RPS20/uS10. Poxvirus encoding mRNAs contain unusual 5' poly(A) leaders and ZNF598 is required for their translational efficiency, possibly via its ability to suppress readthrough or sliding on shorter poly(A) tracts. This Homo sapiens (Human) protein is E3 ubiquitin-protein ligase ZNF598.